The following is a 764-amino-acid chain: DNA-binding protein SATB1 (764 aa).

The span at 1-15 (MDHLNEATQGKEHSE) shows a compositional bias: basic and acidic residues. Residues 1-56 (MDHLNEATQGKEHSEMSNNVSDPKGPPAKIARLEQNGSPLGRGRLGSTGGKMQGVP) are disordered. The short motif at 20–40 (VSDPKGPPAKIARLEQNGSPL) is the Nuclear localization signal element. A compositionally biased stretch (gly residues) spans 43–52 (GRLGSTGGKM). Lys-51 is covalently cross-linked (Glycyl lysine isopeptide (Lys-Gly) (interchain with G-Cter in SUMO2)). In terms of domain architecture, CMP spans 71-172 (GTMLPVFCVV…VVTLKIQLHS (102 aa)). Residue Lys-136 is modified to N6-acetyllysine. A Protein interaction motif is present at residues 139–143 (PVPLS). One can recognise a CUTL domain in the interval 175–248 (KLEDLPPEQW…WYKHFKKTKD (74 aa)). Ser-185 carries the phosphoserine modification. The segment at 224 to 278 (YYANVSAAKCQEFGRWYKHFKKTKDMMVEMDSLSELSQQGANHVNFGQQPVPGNT) is nuclear matrix targeting sequence (NMTS). A Nuclear matrix targeting sequence (NMTS) motif is present at residues 224–278 (YYANVSAAKCQEFGRWYKHFKKTKDMMVEMDSLSELSQQGANHVNFGQQPVPGNT). Polar residues predominate over residues 266–296 (HVNFGQQPVPGNTAEQPPSPAQLSHGSQPSV). The tract at residues 266 to 307 (HVNFGQQPVPGNTAEQPPSPAQLSHGSQPSVRTPLPNLHPGL) is disordered. Residues 361-448 (LEQQVSTNTE…ERDRIYQDER (88 aa)) constitute a DNA-binding region (CUT 1). DNA is bound by residues Gln-390, 400-410 (RTQGLLSEILR), and Asn-425. The interval 450-474 (RSLNAASAMGPAPLLSTPPSRPPQV) is disordered. A DNA-binding region (CUT 2) is located at residues 484–571 (NGKPENNTMN…ERDAIYEQES (88 aa)). Residues 591-650 (QIQQQQQQQQQQQQQQQPPPPPPQPQPQPQAGPRLPPRQPTVASSAESDEENRQKTRPRT) form a disordered region. The segment covering 593–606 (QQQQQQQQQQQQQQ) has biased composition (low complexity). Positions 607–629 (QPPPPPPQPQPQPQAGPRLPPRQ) are enriched in pro residues. At Ser-638 the chain carries Phosphoserine. The homeobox DNA-binding region spans 646–705 (TRPRTKISVEALGILQSFIQDVGLYPDEEAIQTLSAQLDLPKYTIIKFFQNQRYYLKHHG). Residue Lys-745 forms a Glycyl lysine isopeptide (Lys-Gly) (interchain with G-Cter in SUMO) linkage.

The protein belongs to the CUT homeobox family. As to quaternary structure, interacts with PCAF. Interacts with sumoylated PML and HDAC1 Tat via the CMP domain. Also interacts with DYNLT3 and POLR2J2. Binds to EP300. Homodimer. Part of the nuclear protein complex gamma-globin promoter and enhancer binding factor (gamma-PE) composed at least of SATB1 and HOXB2. Interaction with CtBP1 when not acetylated stabilizes attachment to DNA and promotes transcription repression. Interacts with CUX1 (via DNA-binding domains); the interaction inhibits the attachment of both proteins to DNA. Post-translationally, sumoylated. Sumoylation promotes cleavage by caspases. Phosphorylated by PKC. Acetylated by PCAF. Phosphorylated form interacts with HDAC1, but unphosphorylated form interacts with PCAF. DNA binding properties are activated by phosphorylation and inactivated by acetylation. In opposition, gene expression is down-regulated by phosphorylation but up-regulated by acetylation. In terms of processing, cleaved at Asp-254 by caspase-3 and caspase-6 during T-cell apoptosis in thymus and during B-cell stimulation. The cleaved forms cannot dimerize and lose transcription regulation function because of impaired DNA and chromatin association. In terms of tissue distribution, expressed in the subventricular zone, rostral migratory stream and in the olfactory bulb (at protein level). Mainly expressed in thymus, spleen, and lymph nodes with a lower level observed in the brain.

The protein localises to the nucleus. It is found in the PML body. Functionally, required for the switching of fetal globin species, and beta- and gamma-globin genes regulation during erythroid differentiation. Plays a role in chromatin organization and nuclear architecture during apoptosis. Crucial silencing factor contributing to the initiation of X inactivation mediated by Xist RNA that occurs during embryogenesis and in lymphoma. Binds to DNA at special AT-rich sequences, the consensus SATB1-binding sequence (CSBS), at nuclear matrix- or scaffold-associated regions. Thought to recognize the sugar-phosphate structure of double-stranded DNA. Transcriptional repressor controlling nuclear and viral gene expression in a phosphorylated and acetylated status-dependent manner, by binding to matrix attachment regions (MARs) of DNA and inducing a local chromatin-loop remodeling. Acts as a docking site for several chromatin remodeling enzymes and also by recruiting corepressors (HDACs) or coactivators (HATs) directly to promoters and enhancers. Modulates genes that are essential in the maturation of the immune T-cell CD8SP from thymocytes. Promotes neuronal differentiation of neural stem/progenitor cells in the adult subventricular zone, possibly by positively regulating the expression of NEUROD1. This Mus musculus (Mouse) protein is DNA-binding protein SATB1 (Satb1).